Here is a 37-residue protein sequence, read N- to C-terminus: Omega-sparatoxin-Hv1a (37 aa).

Intrachain disulfides connect C4–C18, C11–C23, and C17–C33.

In terms of tissue distribution, expressed by the venom gland.

It is found in the secreted. Its function is as follows. Blocks calcium channels (Cav). The chain is Omega-sparatoxin-Hv1a from Heteropoda venatoria (Brown huntsman spider).